The primary structure comprises 181 residues: Endoglucanase (181 aa).

Cys-4 and Cys-16 are disulfide-bonded. Asp-24 functions as the Nucleophile in the catalytic mechanism. 5 disulfide bridges follow: Cys-30–Cys-69, Cys-32–Cys-176, Cys-65–Cys-178, Cys-72–Cys-157, and Cys-103–Cys-113. The active-site Proton donor is the Asp-132.

As to expression, digestive gland.

It carries out the reaction Endohydrolysis of (1-&gt;4)-beta-D-glucosidic linkages in cellulose, lichenin and cereal beta-D-glucans.. In terms of biological role, active towards the soluble carboxymethylcellulose (CMC). Possesses expansin activity too. This is Endoglucanase from Mytilus edulis (Blue mussel).